We begin with the raw amino-acid sequence, 136 residues long: Pleckstrin homology-like domain family A member 2 (136 aa).

Residues 12–105 (ILKEGDLEKR…WNAEITLALV (94 aa)) form the PH domain.

The protein belongs to the PHLDA2 family.

Its subcellular location is the cytoplasm. It localises to the membrane. Plays a role in regulating placenta growth. May act via its PH domain that competes with other PH domain-containing proteins, thereby preventing their binding to membrane lipids. This is Pleckstrin homology-like domain family A member 2 (phlda2) from Xenopus tropicalis (Western clawed frog).